The chain runs to 504 residues: Aspartyl/glutamyl-tRNA(Asn/Gln) amidotransferase subunit B (504 aa).

The protein belongs to the GatB/GatE family. GatB subfamily. Heterotrimer of A, B and C subunits.

It carries out the reaction L-glutamyl-tRNA(Gln) + L-glutamine + ATP + H2O = L-glutaminyl-tRNA(Gln) + L-glutamate + ADP + phosphate + H(+). The catalysed reaction is L-aspartyl-tRNA(Asn) + L-glutamine + ATP + H2O = L-asparaginyl-tRNA(Asn) + L-glutamate + ADP + phosphate + 2 H(+). Its function is as follows. Allows the formation of correctly charged Asn-tRNA(Asn) or Gln-tRNA(Gln) through the transamidation of misacylated Asp-tRNA(Asn) or Glu-tRNA(Gln) in organisms which lack either or both of asparaginyl-tRNA or glutaminyl-tRNA synthetases. The reaction takes place in the presence of glutamine and ATP through an activated phospho-Asp-tRNA(Asn) or phospho-Glu-tRNA(Gln). The chain is Aspartyl/glutamyl-tRNA(Asn/Gln) amidotransferase subunit B from Tropheryma whipplei (strain Twist) (Whipple's bacillus).